The primary structure comprises 431 residues: Probable 3-hydroxy-3-methylglutaryl-coenzyme A reductase (431 aa).

Catalysis depends on charge relay system residues glutamate 85 and aspartate 278. Histidine 375 acts as the Proton donor in catalysis.

The protein belongs to the HMG-CoA reductase family.

It carries out the reaction (R)-mevalonate + 2 NAD(+) + CoA = (3S)-3-hydroxy-3-methylglutaryl-CoA + 2 NADH + 2 H(+). It participates in metabolic intermediate metabolism; (R)-mevalonate degradation; (S)-3-hydroxy-3-methylglutaryl-CoA from (R)-mevalonate: step 1/1. Functionally, converts HMG-CoA to mevalonate. This is Probable 3-hydroxy-3-methylglutaryl-coenzyme A reductase from Borreliella burgdorferi (strain ATCC 35210 / DSM 4680 / CIP 102532 / B31) (Borrelia burgdorferi).